Consider the following 287-residue polypeptide: Acetylglutamate kinase (287 aa).

Substrate-binding positions include 64–65 (GG), Arg86, and Asn185.

This sequence belongs to the acetylglutamate kinase family. ArgB subfamily.

The protein resides in the cytoplasm. The catalysed reaction is N-acetyl-L-glutamate + ATP = N-acetyl-L-glutamyl 5-phosphate + ADP. The protein operates within amino-acid biosynthesis; L-arginine biosynthesis; N(2)-acetyl-L-ornithine from L-glutamate: step 2/4. Functionally, catalyzes the ATP-dependent phosphorylation of N-acetyl-L-glutamate. This chain is Acetylglutamate kinase, found in Hydrogenobaculum sp. (strain Y04AAS1).